Reading from the N-terminus, the 371-residue chain is Chorismate synthase (371 aa).

NADP(+) contacts are provided by Arg48 and Arg54. Residues 132 to 134 (RSS), 244 to 245 (NA), Gly289, 304 to 308 (KPTSS), and Arg330 contribute to the FMN site.

This sequence belongs to the chorismate synthase family. As to quaternary structure, homotetramer. Requires FMNH2 as cofactor.

The catalysed reaction is 5-O-(1-carboxyvinyl)-3-phosphoshikimate = chorismate + phosphate. Its pathway is metabolic intermediate biosynthesis; chorismate biosynthesis; chorismate from D-erythrose 4-phosphate and phosphoenolpyruvate: step 7/7. Its function is as follows. Catalyzes the anti-1,4-elimination of the C-3 phosphate and the C-6 proR hydrogen from 5-enolpyruvylshikimate-3-phosphate (EPSP) to yield chorismate, which is the branch point compound that serves as the starting substrate for the three terminal pathways of aromatic amino acid biosynthesis. This reaction introduces a second double bond into the aromatic ring system. This Methylobacterium nodulans (strain LMG 21967 / CNCM I-2342 / ORS 2060) protein is Chorismate synthase.